The chain runs to 435 residues: MKAPRLGSEEVSYSDRISYLPDDLLLRILSFIHTSDAISTSLLSKRWKFVWKMMPTLDLDEDSCRNIGTLRFDEGCCMFLKSHEAPVLTSLNLKLMTPSHDIDRLLSNIKPILHEITITSYRYSTIRFPRNLNVCQTLVVMKLQDKVLVDVSFPVCFRSLKSLHLTRVKYSCRESFTTLLSACPVLEDLDLFIGRVHYDCLNSFTIWVPSLQRLSICDESYRFRSTTFEISVPSLKYLKIACQDSCFKFVEDMPNLVEAHVEANQHETKNLLRFLTSVERLKDPDLTDRIFHQLLYLELHLHKRLNGDRILSLLKHSPNLQTLKLNEKPLRSIKDQPNISVRKPNSVPECLTFHLETLEWQGYAGRPEDKEIAVYILGNALRLNTATISRYFSSSRFRHHQKKDLKIVEELKSITKASTSCQLVLQQFIEIKYSM.

An F-box domain is found at 14–60 (SDRISYLPDDLLLRILSFIHTSDAISTSLLSKRWKFVWKMMPTLDLD). In terms of domain architecture, FBD spans 341-390 (VRKPNSVPECLTFHLETLEWQGYAGRPEDKEIAVYILGNALRLNTATISR).

The chain is Putative FBD-associated F-box protein At5g56820 from Arabidopsis thaliana (Mouse-ear cress).